Reading from the N-terminus, the 246-residue chain is tRNA (guanine-N(1)-)-methyltransferase (246 aa).

S-adenosyl-L-methionine is bound by residues Gly-114 and 134 to 139; that span reads IGDYIL. A compositionally biased stretch (basic and acidic residues) spans 219-231; sequence LRRPDLWERHEGA. Residues 219–246 form a disordered region; sequence LRRPDLWERHEGARAQSPSGARRQKKER.

The protein belongs to the RNA methyltransferase TrmD family. Homodimer.

The protein localises to the cytoplasm. The enzyme catalyses guanosine(37) in tRNA + S-adenosyl-L-methionine = N(1)-methylguanosine(37) in tRNA + S-adenosyl-L-homocysteine + H(+). In terms of biological role, specifically methylates guanosine-37 in various tRNAs. This Rhizorhabdus wittichii (strain DSM 6014 / CCUG 31198 / JCM 15750 / NBRC 105917 / EY 4224 / RW1) (Sphingomonas wittichii) protein is tRNA (guanine-N(1)-)-methyltransferase.